The primary structure comprises 203 residues: MGTWILFACLVGAAFAMPLPPHPGHPGYINFSYENSHSQAINVDRIALVLTPLKWYQSMIRPPYSSYGYEPMGGWLHHQIIPVVSQQHPLTHTLQSHHHIPVVPAQQPRVPQQAMMPVPGQQSMTPTQHHQPNLPLPAQQPFQPQPVQPLPHQPMQPQPPVQPMQPLLPQPPLPPMFPMRPLPPILPDLHLEAWPATDKTKRE.

A signal peptide spans 1–16 (MGTWILFACLVGAAFA). The disordered stretch occupies residues 116-180 (MPVPGQQSMT…PPLPPMFPMR (65 aa)). Over residues 120 to 130 (GQQSMTPTQHH) the composition is skewed to polar residues. Positions 131 to 142 (QPNLPLPAQQPF) are enriched in low complexity. Positions 143–180 (QPQPVQPLPHQPMQPQPPVQPMQPLLPQPPLPPMFPMR) are enriched in pro residues.

The protein belongs to the amelogenin family.

Its subcellular location is the secreted. The protein resides in the extracellular space. It localises to the extracellular matrix. Its function is as follows. Plays a role in biomineralization. Seems to regulate the formation of crystallites during the secretory stage of tooth enamel development. Thought to play a major role in the structural organization and mineralization of developing enamel. This Pan troglodytes (Chimpanzee) protein is Amelogenin, Y isoform (AMELY).